The chain runs to 281 residues: 4-deoxy-L-threo-5-hexosulose-uronate ketol-isomerase (281 aa).

Zn(2+) is bound by residues H198, H200, E205, and H248.

It belongs to the KduI family. It depends on Zn(2+) as a cofactor.

It catalyses the reaction 5-dehydro-4-deoxy-D-glucuronate = 3-deoxy-D-glycero-2,5-hexodiulosonate. Its pathway is glycan metabolism; pectin degradation; 2-dehydro-3-deoxy-D-gluconate from pectin: step 4/5. Catalyzes the isomerization of 5-dehydro-4-deoxy-D-glucuronate to 3-deoxy-D-glycero-2,5-hexodiulosonate. The sequence is that of 4-deoxy-L-threo-5-hexosulose-uronate ketol-isomerase from Levilactobacillus brevis (strain ATCC 367 / BCRC 12310 / CIP 105137 / JCM 1170 / LMG 11437 / NCIMB 947 / NCTC 947) (Lactobacillus brevis).